The primary structure comprises 141 residues: Large ribosomal subunit protein uL11 (141 aa).

This sequence belongs to the universal ribosomal protein uL11 family. As to quaternary structure, part of the ribosomal stalk of the 50S ribosomal subunit. Interacts with L10 and the large rRNA to form the base of the stalk. L10 forms an elongated spine to which L12 dimers bind in a sequential fashion forming a multimeric L10(L12)X complex. One or more lysine residues are methylated.

In terms of biological role, forms part of the ribosomal stalk which helps the ribosome interact with GTP-bound translation factors. This Clostridium acetobutylicum (strain ATCC 824 / DSM 792 / JCM 1419 / IAM 19013 / LMG 5710 / NBRC 13948 / NRRL B-527 / VKM B-1787 / 2291 / W) protein is Large ribosomal subunit protein uL11.